The following is a 234-amino-acid chain: Large ribosomal subunit protein uL1 (234 aa).

This sequence belongs to the universal ribosomal protein uL1 family. As to quaternary structure, part of the 50S ribosomal subunit.

Binds directly to 23S rRNA. The L1 stalk is quite mobile in the ribosome, and is involved in E site tRNA release. Its function is as follows. Protein L1 is also a translational repressor protein, it controls the translation of the L11 operon by binding to its mRNA. In Salmonella gallinarum (strain 287/91 / NCTC 13346), this protein is Large ribosomal subunit protein uL1.